We begin with the raw amino-acid sequence, 217 residues long: Transmembrane protein 247 (217 aa).

Over residues 1-10 (MATEDREMME) the composition is skewed to basic and acidic residues. The interval 1–87 (MATEDREMME…GPATTKGQAG (87 aa)) is disordered. The stretch at 109-154 (RERDAEMELEKVRMEFELKRLKYLHEENERQRQHEEVMEQLQQQAT) forms a coiled coil. A run of 2 helical transmembrane segments spans residues 165–185 (LLLP…IHII) and 192–212 (IFFL…LCLI).

It is found in the membrane. In Bos taurus (Bovine), this protein is Transmembrane protein 247.